The primary structure comprises 244 residues: 5-oxoprolinase subunit A (244 aa).

This sequence belongs to the LamB/PxpA family. Forms a complex composed of PxpA, PxpB and PxpC.

It catalyses the reaction 5-oxo-L-proline + ATP + 2 H2O = L-glutamate + ADP + phosphate + H(+). Functionally, catalyzes the cleavage of 5-oxoproline to form L-glutamate coupled to the hydrolysis of ATP to ADP and inorganic phosphate. The chain is 5-oxoprolinase subunit A from Salmonella agona (strain SL483).